A 1087-amino-acid polypeptide reads, in one-letter code: Exportin-7 (1087 aa).

The residue at position 2 (Ala2) is an N-acetylalanine. Residues 30-96 (AEKALVEFTN…RNYVLNYLAT (67 aa)) enclose the Importin N-terminal domain. Residue Ser570 is modified to Phosphoserine.

The protein belongs to the exportin family. In terms of assembly, binds to nucleoporins. Found in a complex with XPO7, EIF4A1, ARHGAP1, VPS26A, VPS29, VPS35 and SFN. Interacts with ARHGAP1 and SFN. Interacts with Ran and cargo proteins in a GTP-dependent manner. As to expression, highly expressed in testis and spleen, moderate in kidney and liver and low in heart, brain, lung and skeletal muscle.

The protein localises to the cytoplasm. It is found in the nucleus. Functionally, mediates the nuclear export of proteins (cargos) with broad substrate specificity. In the nucleus binds cooperatively to its cargo and to the GTPase Ran in its active GTP-bound form. Docking of this trimeric complex to the nuclear pore complex (NPC) is mediated through binding to nucleoporins. Upon transit of a nuclear export complex into the cytoplasm, disassembling of the complex and hydrolysis of Ran-GTP to Ran-GDP (induced by RANBP1 and RANGAP1, respectively) cause release of the cargo from the export receptor. XPO7 then return to the nuclear compartment and mediate another round of transport. The directionality of nuclear export is thought to be conferred by an asymmetric distribution of the GTP- and GDP-bound forms of Ran between the cytoplasm and nucleus. The sequence is that of Exportin-7 (Xpo7) from Mus musculus (Mouse).